Reading from the N-terminus, the 608-residue chain is ATP-citrate synthase beta chain protein 1 (608 aa).

Residues 214–234 and 265–291 contribute to the ATP site; these read ILRF…ELGG and FKSE…KNQA. Glu-231 lines the Mg(2+) pocket. The active-site Tele-phosphohistidine intermediate is the His-273. Position 292-302 (292-302) interacts with CoA; it reads LKDAGAVVPTS.

Belongs to the succinate/malate CoA ligase alpha subunit family. In terms of assembly, heterooctamer of 4 alpha and 4 beta chains.

It localises to the cytoplasm. The protein localises to the cytosol. It carries out the reaction oxaloacetate + acetyl-CoA + ADP + phosphate = citrate + ATP + CoA. ATP citrate-lyase is the primary enzyme responsible for the synthesis of cytosolic acetyl-CoA, used for the elongation of fatty acids and biosynthesis of isoprenoids, flavonoids and malonated derivatives. May supply substrate to the cytosolic acetyl-CoA carboxylase, which generates the malonyl-CoA used for the synthesis of a multitude of compounds, including very long chain fatty acids and flavonoids. In contrast to all known animal ACL enzymes having a homomeric structure, plant ACLs are composed of alpha and beta chains. This Oryza sativa subsp. japonica (Rice) protein is ATP-citrate synthase beta chain protein 1 (ACLB-1).